The sequence spans 391 residues: Cyclin-B1-2 (391 aa).

Belongs to the cyclin family. Cyclin AB subfamily.

The polypeptide is Cyclin-B1-2 (CYCB1-2) (Oryza sativa subsp. japonica (Rice)).